A 2896-amino-acid polypeptide reads, in one-letter code: 3'-5' exoribonuclease HELZ2 (2896 aa).

2 C3H1-type zinc fingers span residues 90 to 114 (VCHY…RSRE) and 217 to 246 (GQPP…HSAV). Residues 287–311 (LYCPACLVTCHSQEAFENHCASSEH) form a C2H2-type; atypical zinc finger. Residues 327 to 357 (SPPPGLSKFELCPKPDLCEYGDACTKAHSAQ) form a C3H1-type 3 zinc finger. In terms of domain architecture, UvrD-like helicase ATP-binding spans 770 to 1126 (VALIAGWGPG…VVLSTVHTCQ (357 aa)). 791-798 (GPFGTGKT) contacts ATP. The interaction with THRAP3 stretch occupies residues 810 to 1306 (RRPETKVLIC…ESTEAEDAEA (497 aa)). A DEAA box motif is present at residues 914–917 (DEAA). Ser1253 bears the Phosphoserine mark. Short sequence motifs (LXXLL motif) lie at residues 1322 to 1326 (LRELL), 1365 to 1369 (LRKLL), and 1420 to 1424 (LVQLL). Residues 1581-1938 (REDCRAFLTF…VLQRQILLAL (358 aa)) form the RNB domain. Positions 2259–2263 (LEGLP) match the LXXLL motif 4 motif. Positions 2382-2896 (PSRFLERQTY…RVCRRPTMPS (515 aa)) are interaction with THRAP3. Positions 2400-2675 (LNPSQNVAVR…HMLDTQYRMH (276 aa)) constitute a UvrD-like helicase ATP-binding 2 domain. Position 2421 to 2428 (2421 to 2428 (GPPGTGKT)) interacts with ATP. The LXXLL motif 5 motif lies at 2476 to 2480 (LAGLL).

The protein belongs to the DNA2/NAM7 helicase family. Interacts with PPARA (via DNA-binding domain) and PPARG; the interaction stimulates the transcriptional activity of PPARA and PPARG. Interacts with THRAP3; the interaction is direct and HELZ2 and THRAP3 synergistically enhance the transcriptional activity of PPARG. It is probably part of the peroxisome proliferator activated receptor alpha interacting complex (PRIC). In terms of tissue distribution, expressed in various tissues including heart, pancreas, skeletal muscle, colon, spleen, liver, kidney, lung, peripheral blood and placenta.

The protein localises to the cytoplasm. The enzyme catalyses Exonucleolytic cleavage in the 3'- to 5'-direction to yield nucleoside 5'-phosphates.. It carries out the reaction ATP + H2O = ADP + phosphate + H(+). Can degrade highly structured RNAs through its concerted ATP-dependent RNA helicase and 3' to 5' exoribonuclease activities. Shows a strong preference for pyrimidine over purine residues for its nuclease activity. Acts as a transcriptional coactivator for a number of nuclear receptors including PPARA, PPARG, THRA, THRB and RXRA. The chain is 3'-5' exoribonuclease HELZ2 from Homo sapiens (Human).